Here is a 205-residue protein sequence, read N- to C-terminus: Protein N-terminal glutamine amidohydrolase (205 aa).

Residues Cys-20, His-74, and Asp-90 contribute to the active site.

Belongs to the NTAQ1 family. As to quaternary structure, monomer.

The catalysed reaction is N-terminal L-glutaminyl-[protein] + H2O = N-terminal L-glutamyl-[protein] + NH4(+). Mediates the side-chain deamidation of N-terminal glutamine residues to glutamate, an important step in N-end rule pathway of protein degradation. Conversion of the resulting N-terminal glutamine to glutamate renders the protein susceptible to arginylation, polyubiquitination and degradation as specified by the N-end rule. Does not act on substrates with internal or C-terminal glutamine and does not act on non-glutamine residues in any position. The polypeptide is Protein N-terminal glutamine amidohydrolase (tun) (Drosophila erecta (Fruit fly)).